The chain runs to 293 residues: Mycothiol S-conjugate amidase (293 aa).

Residues His-13, Asp-16, and His-144 each contribute to the Zn(2+) site.

The protein belongs to the MshB deacetylase family. Mca subfamily. Monomer. Requires Zn(2+) as cofactor.

The enzyme catalyses mycothiol S-conjugate + H2O = an N-acetyl-L-cysteine-S-conjugate + 1D-myo-inositol 2-amino-2-deoxy-alpha-D-glucopyranoside. Functionally, a mycothiol (MSH, N-acetylcysteinyl-glucosaminyl-inositol) S-conjugate amidase, it recycles conjugated MSH to the N-acetyl cysteine conjugate (AcCys S-conjugate, a mercapturic acid) and the MSH precursor. Involved in MSH-dependent detoxification of a number of alkylating agents and antibiotics. This is Mycothiol S-conjugate amidase from Streptomyces coelicolor (strain ATCC BAA-471 / A3(2) / M145).